A 30-amino-acid chain; its full sequence is Protamine-YII (30 aa).

The disordered stretch occupies residues proline 1–arginine 30.

Testis.

The protein resides in the nucleus. It is found in the chromosome. Functionally, protamines substitute for histones in the chromatin of sperm during the haploid phase of spermatogenesis. They compact sperm DNA into a highly condensed, stable and inactive complex. The chain is Protamine-YII from Clupea harengus (Atlantic herring).